Reading from the N-terminus, the 726-residue chain is Transferrin (726 aa).

Residues 1–16 form the signal peptide; it reads MLLCLTLLFSASAVLA. 2 Transferrin-like domains span residues 29–367 and 374–719; these read YKVC…ERDT and VRFC…VIRA. Disulfide bonds link cysteine 32–cysteine 63 and cysteine 41–cysteine 54. Fe(3+) contacts are provided by aspartate 78 and tyrosine 111. 4 disulfides stabilise this stretch: cysteine 135–cysteine 231, cysteine 184–cysteine 210, cysteine 207–cysteine 216, and cysteine 274–cysteine 287. Threonine 137, arginine 141, valine 143, and glycine 144 together coordinate hydrogencarbonate. Asparagine 162 carries an N-linked (GlcNAc...) asparagine glycan. Tyrosine 225 contributes to the Fe(3+) binding site. Residues asparagine 337 and asparagine 358 are each glycosylated (N-linked (GlcNAc...) asparagine). Disulfide bonds link cysteine 377-cysteine 414 and cysteine 387-cysteine 405. Positions 429 and 457 each coordinate Fe(3+). Cysteine 481 and cysteine 562 are disulfide-bonded. The hydrogencarbonate site is built by threonine 483, arginine 487, alanine 489, and glycine 490. Fe(3+)-binding residues include tyrosine 573 and histidine 642.

This sequence belongs to the transferrin family.

Its subcellular location is the secreted. Transferrins are iron binding transport proteins which bind Fe(3+) ion in association with the binding of an anion, usually bicarbonate. The chain is Transferrin from Blaberus discoidalis (Tropical cockroach).